A 215-amino-acid polypeptide reads, in one-letter code: Pyridoxine/pyridoxamine 5'-phosphate oxidase (215 aa).

Substrate is bound by residues Arg9 to Tyr12 and Lys69. FMN is bound by residues Arg64–Lys69, Phe79–Thr80, Lys86, and Gln108. Residues Tyr126, Arg130, and Ser134 each contribute to the substrate site. Residues Gln143–Ser144 and Trp188 each bind FMN. Position 194–196 (Arg194–His196) interacts with substrate. Arg198 is a binding site for FMN.

The protein belongs to the pyridoxamine 5'-phosphate oxidase family. Homodimer. The cofactor is FMN.

The enzyme catalyses pyridoxamine 5'-phosphate + O2 + H2O = pyridoxal 5'-phosphate + H2O2 + NH4(+). It catalyses the reaction pyridoxine 5'-phosphate + O2 = pyridoxal 5'-phosphate + H2O2. It participates in cofactor metabolism; pyridoxal 5'-phosphate salvage; pyridoxal 5'-phosphate from pyridoxamine 5'-phosphate: step 1/1. The protein operates within cofactor metabolism; pyridoxal 5'-phosphate salvage; pyridoxal 5'-phosphate from pyridoxine 5'-phosphate: step 1/1. Its function is as follows. Catalyzes the oxidation of either pyridoxine 5'-phosphate (PNP) or pyridoxamine 5'-phosphate (PMP) into pyridoxal 5'-phosphate (PLP). This Pseudomonas fluorescens (strain Pf0-1) protein is Pyridoxine/pyridoxamine 5'-phosphate oxidase.